A 728-amino-acid chain; its full sequence is UvrABC system protein C (728 aa).

Positions 16 to 95 (DSPGVYRFRD…IKEYDPRFNV (80 aa)) constitute a GIY-YIG domain. Residues 208 to 243 (GTYLRRLERQMAEAAEEMEYERAARLRDDIGALKKA) form the UVR domain. Disordered regions lie at residues 473 to 535 (ADGE…GRPK) and 689 to 728 (VNTA…GQER). The span at 487-505 (GDAAPNGDAAPNDGAAPDD) shows a compositional bias: low complexity.

The protein belongs to the UvrC family. In terms of assembly, interacts with UvrB in an incision complex.

It localises to the cytoplasm. Its function is as follows. The UvrABC repair system catalyzes the recognition and processing of DNA lesions. UvrC both incises the 5' and 3' sides of the lesion. The N-terminal half is responsible for the 3' incision and the C-terminal half is responsible for the 5' incision. This is UvrABC system protein C from Streptomyces coelicolor (strain ATCC BAA-471 / A3(2) / M145).